Reading from the N-terminus, the 187-residue chain is Peptide deformylase 1 (187 aa).

Residues C107 and H149 each coordinate Fe cation. E150 is a catalytic residue. H153 serves as a coordination point for Fe cation.

Belongs to the polypeptide deformylase family. Fe(2+) is required as a cofactor.

The catalysed reaction is N-terminal N-formyl-L-methionyl-[peptide] + H2O = N-terminal L-methionyl-[peptide] + formate. In terms of biological role, removes the formyl group from the N-terminal Met of newly synthesized proteins. Requires at least a dipeptide for an efficient rate of reaction. N-terminal L-methionine is a prerequisite for activity but the enzyme has broad specificity at other positions. The sequence is that of Peptide deformylase 1 from Nostoc sp. (strain PCC 7120 / SAG 25.82 / UTEX 2576).